The sequence spans 757 residues: Probable phospholipase C20G8.02, mitochondrial (757 aa).

The transit peptide at 1–13 directs the protein to the mitochondrion; the sequence is MILYIVLPFYVRT. Residues 289 to 330 form a disordered region; it reads ESNSKPSTPVPTEELTSTTLLNDSSDPSDNFTPSNTESTIDL. The span at 302–329 shows a compositional bias: polar residues; the sequence is ELTSTTLLNDSSDPSDNFTPSNTESTID. Residue Ser-524 is part of the active site. A DDHD domain is found at 547–757; it reads LDFPVANFFA…LAHFILTQLL (211 aa).

Belongs to the PA-PLA1 family.

Its subcellular location is the mitochondrion. Probable phospholipase that hydrolyzes phosphatidic acid. The chain is Probable phospholipase C20G8.02, mitochondrial from Schizosaccharomyces pombe (strain 972 / ATCC 24843) (Fission yeast).